Reading from the N-terminus, the 847-residue chain is Signal transducer and activator of transcription 6 (847 aa).

At S2 the chain carries N-acetylserine. An SH2 domain is found at 517 to 632 (WFDGVLDLTK…EAFRSHYKPE (116 aa)). Y641 carries the phosphotyrosine; by JAK modification. The LXXLL motif motif lies at 802 to 806 (LTKLL). Residues 809 to 847 (GQGESGGGSLGAQPLLQPSHYGQSGISMSHMDLRANPSW) are disordered.

This sequence belongs to the transcription factor STAT family. In terms of assembly, forms a homodimer or a heterodimer with a related family member. Interacts with NCOA1 via its C-terminal LXXLL motif. Post-translationally, tyrosine phosphorylated on Tyr-641 following stimulation by IL4/interleukin-4. Tyrosine phosphorylated following stimulation by IL3/interleukin-3. Dephosphorylation on tyrosine residues by PTPN2 negatively regulates the IL4/interleukin-4 mediated signaling. In terms of processing, mono-ADP-ribosylated by PARP14.

Its subcellular location is the cytoplasm. The protein resides in the nucleus. Functionally, carries out a dual function: signal transduction and activation of transcription. Involved in IL4/interleukin-4- and IL3/interleukin-3-mediated signaling. This Homo sapiens (Human) protein is Signal transducer and activator of transcription 6 (STAT6).